A 440-amino-acid chain; its full sequence is Cysteine proteinase (440 aa).

The N-terminal stretch at 1–60 is a signal peptide; it reads MYSSSVVSNPNERLVNNRVENDLESSDDTLSTQAKPVSRLLTRKLLLGVVVLFFLAGVSV. The propeptide at 61–229 is activation peptide; that stretch reads VSYFLFSKYK…DEDVDLAKLT (169 aa). Residues 166-182 form an involved in processing to yield active enzymes region; the sequence is VKGINRFSDLTEREFYK. Residue Asn206 is glycosylated (N-linked (GlcNAc...) asparagine). An intrachain disulfide couples Cys250 to Cys291. Catalysis depends on residues Cys253, His382, and Asn404.

It belongs to the peptidase C1 family.

The sequence is that of Cysteine proteinase from Theileria parva (East coast fever infection agent).